We begin with the raw amino-acid sequence, 249 residues long: Imidazole glycerol phosphate synthase subunit HisF (249 aa).

Residues Asp11 and Asp130 contribute to the active site.

Belongs to the HisA/HisF family. As to quaternary structure, heterodimer of HisH and HisF.

It is found in the cytoplasm. The catalysed reaction is 5-[(5-phospho-1-deoxy-D-ribulos-1-ylimino)methylamino]-1-(5-phospho-beta-D-ribosyl)imidazole-4-carboxamide + L-glutamine = D-erythro-1-(imidazol-4-yl)glycerol 3-phosphate + 5-amino-1-(5-phospho-beta-D-ribosyl)imidazole-4-carboxamide + L-glutamate + H(+). Its pathway is amino-acid biosynthesis; L-histidine biosynthesis; L-histidine from 5-phospho-alpha-D-ribose 1-diphosphate: step 5/9. Its function is as follows. IGPS catalyzes the conversion of PRFAR and glutamine to IGP, AICAR and glutamate. The HisF subunit catalyzes the cyclization activity that produces IGP and AICAR from PRFAR using the ammonia provided by the HisH subunit. The chain is Imidazole glycerol phosphate synthase subunit HisF from Sulfolobus acidocaldarius (strain ATCC 33909 / DSM 639 / JCM 8929 / NBRC 15157 / NCIMB 11770).